The following is an 86-amino-acid chain: Large ribosomal subunit protein bL27 (86 aa).

The span at 1 to 10 (MAQKKGGGST) shows a compositional bias: gly residues. The segment at 1–20 (MAQKKGGGSTRNGRDSESKR) is disordered.

The protein belongs to the bacterial ribosomal protein bL27 family.

The chain is Large ribosomal subunit protein bL27 from Polynucleobacter necessarius subsp. necessarius (strain STIR1).